A 216-amino-acid polypeptide reads, in one-letter code: Small ribosomal subunit protein uS3 (216 aa).

One can recognise a KH type-2 domain in the interval 38–106; it reads IRGYLKKKLY…EIIINILEVR (69 aa).

Belongs to the universal ribosomal protein uS3 family. Part of the 30S ribosomal subunit. Forms a tight complex with proteins S10 and S14.

Its function is as follows. Binds the lower part of the 30S subunit head. Binds mRNA in the 70S ribosome, positioning it for translation. The protein is Small ribosomal subunit protein uS3 of Syntrophus aciditrophicus (strain SB).